The primary structure comprises 352 residues: Selenide, water dikinase (352 aa).

C23 is an active-site residue. Residues K26 and S54 to D56 contribute to the ATP site. D57 is a Mg(2+) binding site. ATP contacts are provided by residues D74, D97, and G145 to S147. D97 lines the Mg(2+) pocket. D233 provides a ligand contact to Mg(2+).

The protein belongs to the selenophosphate synthase 1 family. Class I subfamily. As to quaternary structure, homodimer. Mg(2+) is required as a cofactor.

The catalysed reaction is hydrogenselenide + ATP + H2O = selenophosphate + AMP + phosphate + 2 H(+). Its function is as follows. Synthesizes selenophosphate from selenide and ATP. The protein is Selenide, water dikinase of Shewanella sp. (strain ANA-3).